A 901-amino-acid chain; its full sequence is Protein translocase subunit SecA (901 aa).

ATP-binding positions include glutamine 87, 105–109, and aspartate 512; that span reads GEGKT. The tract at residues 859–901 is disordered; it reads HQDDDSAAAAALAAQTGERKVGRNDPCPCGSGKKYKQCHGRLQ. Positions 885, 887, 896, and 897 each coordinate Zn(2+). Residues 891–901 show a composition bias toward basic residues; that stretch reads KKYKQCHGRLQ.

This sequence belongs to the SecA family. Monomer and homodimer. Part of the essential Sec protein translocation apparatus which comprises SecA, SecYEG and auxiliary proteins SecDF-YajC and YidC. Requires Zn(2+) as cofactor.

It localises to the cell inner membrane. The protein resides in the cytoplasm. The enzyme catalyses ATP + H2O + cellular proteinSide 1 = ADP + phosphate + cellular proteinSide 2.. Its function is as follows. Part of the Sec protein translocase complex. Interacts with the SecYEG preprotein conducting channel. Has a central role in coupling the hydrolysis of ATP to the transfer of proteins into and across the cell membrane, serving both as a receptor for the preprotein-SecB complex and as an ATP-driven molecular motor driving the stepwise translocation of polypeptide chains across the membrane. This chain is Protein translocase subunit SecA, found in Escherichia coli O127:H6 (strain E2348/69 / EPEC).